The primary structure comprises 420 residues: Vasopressin V1a receptor (420 aa).

A disordered region spans residues 1-20; the sequence is MSFPRGSYDPAASNSSPWWP. The Extracellular segment spans residues 1 to 54; it reads MSFPRGSYDPAASNSSPWWPLSAEDANSSWEAAGHQKGSDPSGDVRNEELAKLE. A glycan (N-linked (GlcNAc...) asparagine) is linked at Asn27. Residues 55–75 form a helical membrane-spanning segment; it reads IAVLAVIFVVAVLGNSSVLLA. Topologically, residues 76 to 92 are cytoplasmic; that stretch reads LHRTPRKTSRMHLFIRH. Residues 93–113 form a helical membrane-spanning segment; it reads LSLADLAVAFFQVLPQLCWDI. At 114-125 the chain is on the extracellular side; that stretch reads TYRFRGPDWLCR. A disulfide bond links Cys124 and Cys205. The chain crosses the membrane as a helical span at residues 126–146; that stretch reads VVKHLQVFAMFASAYMLVVMT. The Cytoplasmic portion of the chain corresponds to 147–168; it reads ADRYIAVCHPLKTLQQPTRRSR. The chain crosses the membrane as a helical span at residues 169-189; that stretch reads LMIAASWVLSFLLSTPQYFIF. Over 190–225 the chain is Extracellular; the sequence is SMIEIEVNNGTKTQDCWATFIQPWGTRAYVTWMTSG. An N-linked (GlcNAc...) asparagine glycan is attached at Asn198. The chain crosses the membrane as a helical span at residues 226-246; sequence VFVVPVVILGTCYGFICYHIW. Residues 247–294 are Cytoplasmic-facing; sequence RNVRGKTASRQSKGSGEDVAPFHKGLLVTPCVSSVKTISRAKIRTVKM. The chain crosses the membrane as a helical span at residues 295–315; sequence TFVIVTAYILCWAPFFIVQMW. Residues 316–331 lie on the Extracellular side of the membrane; sequence SVWDDNFIWTDSENPS. The chain crosses the membrane as a helical span at residues 332–352; sequence ITITALLASLNSCCNPWIYMF. At 353–420 the chain is on the cytoplasmic side; it reads FSGHLLQDCV…RSIRFIPVST (68 aa). Residues Cys367 and Cys368 are each lipidated (S-palmitoyl cysteine). The tract at residues 379–411 is disordered; that stretch reads DSDNMSRRHTSYSNNRSPTNSTGTWKDSPKSSR. Residues 389–403 show a composition bias toward polar residues; the sequence is SYSNNRSPTNSTGTW. A Phosphoserine modification is found at Ser406.

The protein belongs to the G-protein coupled receptor 1 family. Vasopressin/oxytocin receptor subfamily.

It is found in the cell membrane. Its function is as follows. Receptor for arginine vasopressin. The activity of this receptor is mediated by G proteins which activate a phosphatidyl-inositol-calcium second messenger system. Involved in social memory formation. The chain is Vasopressin V1a receptor (Avpr1a) from Microtus ochrogaster (Prairie vole).